We begin with the raw amino-acid sequence, 633 residues long: Chaperone protein HtpG (633 aa).

The segment at 1 to 344 (MSLQPQAETL…SNDLPLNISR (344 aa)) is a; substrate-binding. Positions 345–560 (ELLQSNEVIN…ENEMSGHLQR (216 aa)) are b. Residues 561–633 (LLIQTGQDFM…KGLNELLLDS (73 aa)) are c.

This sequence belongs to the heat shock protein 90 family. Homodimer.

The protein localises to the cytoplasm. Functionally, molecular chaperone. Has ATPase activity. The chain is Chaperone protein HtpG from Coxiella burnetii (strain RSA 493 / Nine Mile phase I).